A 609-amino-acid chain; its full sequence is UvrABC system protein C (609 aa).

One can recognise a GIY-YIG domain in the interval 16 to 94 (SSAGVYRMYD…IKQYMPKYNV (79 aa)). The 36-residue stretch at 203–238 (KQVISELVAKMEEAAGQQAYEQAARFRDQIMALRRV) folds into the UVR domain.

The protein belongs to the UvrC family. As to quaternary structure, interacts with UvrB in an incision complex.

Its subcellular location is the cytoplasm. In terms of biological role, the UvrABC repair system catalyzes the recognition and processing of DNA lesions. UvrC both incises the 5' and 3' sides of the lesion. The N-terminal half is responsible for the 3' incision and the C-terminal half is responsible for the 5' incision. The chain is UvrABC system protein C from Shewanella sp. (strain ANA-3).